The following is a 566-amino-acid chain: Alpha-keto-acid decarboxylase (566 aa).

Residue E61 participates in thiamine diphosphate binding. Positions 396 to 478 (TSFYGMADHR…VVVNNDGYTV (83 aa)) are thiamine pyrophosphate binding. Positions 446, 473, and 475 each coordinate Mg(2+).

This sequence belongs to the TPP enzyme family. It depends on a metal cation as a cofactor. Requires thiamine diphosphate as cofactor.

In terms of biological role, decarboxylates branched-chain and aromatic alpha-keto acids to aldehydes. The polypeptide is Alpha-keto-acid decarboxylase (kdc) (Mycobacterium ulcerans (strain Agy99)).